A 551-amino-acid chain; its full sequence is Arginine--tRNA ligase (551 aa).

Positions A123 to R133 match the 'HIGH' region motif.

It belongs to the class-I aminoacyl-tRNA synthetase family. In terms of assembly, monomer.

Its subcellular location is the cytoplasm. It carries out the reaction tRNA(Arg) + L-arginine + ATP = L-arginyl-tRNA(Arg) + AMP + diphosphate. This is Arginine--tRNA ligase from Chlorobium limicola (strain DSM 245 / NBRC 103803 / 6330).